Reading from the N-terminus, the 280-residue chain is MATNFLMHEKIWFDKFKYDDAERKFYEQMNGPVAGSSRQENGASVILRDIARARENIQKSLAGSSGPGASSGPSGDHSELVTRIASLEVENQSLRGVVQDLQQAVSKLEARLSALEKSSPAHRATTPQTQHVSPMRQVEPPSRKAATATEDDEDDDIDLFGSDEEEDKEATRLREERLRQYAEKKAKKPALVAKSSILLDVKPWDDETDMAQLEACVRSVQLDGLVWGSSKLVPVGYGIRKLQIQCVVEDDKVGTDQLEEEITKFEEHVQSVDIAAFNKI.

An N-acetylalanine modification is found at A2. K17 bears the N6-acetyllysine mark. Residues S37, S44, S60, S86, and S106 each carry the phosphoserine modification. Position 107 is an N6-acetyllysine (K107). Residues 113-171 (SALEKSSPAHRATTPQTQHVSPMRQVEPPSRKAATATEDDEDDDIDLFGSDEEEDKEAT) are disordered. Residue K117 is modified to N6-acetyllysine; alternate. N6-succinyllysine; alternate is present on K117. S119 bears the Phosphoserine mark. At T129 the chain carries Phosphothreonine. Position 133 is a phosphoserine (S133). Residue T147 is modified to Phosphothreonine. Residues 149–168 (TEDDEDDDIDLFGSDEEEDK) show a composition bias toward acidic residues. S162 carries the phosphoserine; by CK2 modification.

Belongs to the EF-1-beta/EF-1-delta family. As to quaternary structure, EF-1 is composed of 4 subunits: alpha, beta, delta, and gamma.

EF-1-beta and EF-1-delta stimulate the exchange of GDP bound to EF-1-alpha to GTP. The chain is Elongation factor 1-delta (EEF1D) from Bos taurus (Bovine).